Reading from the N-terminus, the 431-residue chain is Teosinte glume architecture 1 (431 aa).

Disordered regions lie at residues Gln18 to Ala55 and Glu68 to Pro102. Residues Ala21 to Thr41 show a composition bias toward low complexity. An SBP-type zinc finger spans residues Cys101–Pro178. Zn(2+) is bound by residues Cys104, Cys109, Cys126, His129, Cys145, Cys148, His152, and Cys164. Positions Gly408–Asp419 are enriched in gly residues. Residues Gly408–Gln431 are disordered.

As to quaternary structure, monomer and homodimer. As to expression, strongly expressed in immature ears and weakly in husks. Found in the inflorescence meristem of the developing ear, in the spikelet pair primordia, the glume primordia, the cupule forming region and other floral organs. Not detected in other tissues.

SBP transcriptional regulator probably involved in the domestication of maize. Acts as a transcriptional repressor binding to a 5'-GTAC-3' motif. May repress the growth of lateral branches in length and numbers. In Zea mays (Maize), this protein is Teosinte glume architecture 1.